The chain runs to 442 residues: Glutamate synthase large subunit-like protein (442 aa).

The segment at 108-133 is disordered; sequence LGRGATASGTSTTTGDGGMTDEERGH. A compositionally biased stretch (low complexity) spans 109–121; it reads GRGATASGTSTTT.

The protein belongs to the glutamate synthase family.

The chain is Glutamate synthase large subunit-like protein (glxD) from Rhizobium meliloti (strain 1021) (Ensifer meliloti).